We begin with the raw amino-acid sequence, 251 residues long: tRNA pseudouridine synthase A (251 aa).

The active-site Nucleophile is the aspartate 52. Tyrosine 113 contributes to the substrate binding site.

Belongs to the tRNA pseudouridine synthase TruA family. As to quaternary structure, homodimer.

The catalysed reaction is uridine(38/39/40) in tRNA = pseudouridine(38/39/40) in tRNA. Its function is as follows. Formation of pseudouridine at positions 38, 39 and 40 in the anticodon stem and loop of transfer RNAs. The protein is tRNA pseudouridine synthase A of Brucella anthropi (strain ATCC 49188 / DSM 6882 / CCUG 24695 / JCM 21032 / LMG 3331 / NBRC 15819 / NCTC 12168 / Alc 37) (Ochrobactrum anthropi).